The following is a 650-amino-acid chain: MTSQEYYTQVQILKKMAYHYYVLDEPIATDEQYDSLYHQIVRFEEENPHLIDASSPTQRVGDVPLESFSKNTHLERMWSLEDVFNYDELVEWVQRIYKSYPQATFTCSPKFDGASLNLLYQEGKLVSATTRGDGVIGELVTHNAKTIQSIPLEINYKEEIEIRGEVVIAKEDFEYINQDRLSENLSLFANPRNAAAGSLRQLDAKITAKRKLRFMPWGIGAGLIRFESFYEAFNTITRLGFAPVPFLSYCESIESIQNAYNVLFSQRNNYPIMLDGMVIMLDKIASQQQLGWTIKSPRFACAYKFPAVEKSSKILSVSLQVGRTGIITPVAELKPVEIEGAMISRATLHNFSEIERKDIRLGDEVIIIRSGDVIPKIIKPLVALRDGTQKVISKPTHCPVCGEELLLEDIFIKCQNLSCEARVIESIIHFASKKALNIDGLGEKIVIQLYENAFVRNIKDIYALSIQQLLTLEGWQEKRANNLIYAIQNTIGVELWRFINALGIEHIGEGASKKLAQKFGLNVFELELSEILSVDGFGEEMAYSLVEFNHANKTLIAELLCIIKPKVELLEIDNNNVFFNKTIVLTGTLSQPRDRIIKLLESKGAKISSSVSKKTDFVIYGEKAGSKLEKAQSLNITTLNEEEFLAQINK.

NAD(+) is bound by residues 30 to 34 and 79 to 80; these read DEQYD and SL. K110 functions as the N6-AMP-lysine intermediate in the catalytic mechanism. NAD(+) contacts are provided by R131, E165, and K304. Zn(2+) contacts are provided by C398, C401, C414, and C419. The 78-residue stretch at 573–650 folds into the BRCT domain; sequence DNNNVFFNKT…EEEFLAQINK (78 aa).

It belongs to the NAD-dependent DNA ligase family. LigA subfamily. Mg(2+) serves as cofactor. Mn(2+) is required as a cofactor.

It catalyses the reaction NAD(+) + (deoxyribonucleotide)n-3'-hydroxyl + 5'-phospho-(deoxyribonucleotide)m = (deoxyribonucleotide)n+m + AMP + beta-nicotinamide D-nucleotide.. Functionally, DNA ligase that catalyzes the formation of phosphodiester linkages between 5'-phosphoryl and 3'-hydroxyl groups in double-stranded DNA using NAD as a coenzyme and as the energy source for the reaction. It is essential for DNA replication and repair of damaged DNA. This chain is DNA ligase, found in Helicobacter hepaticus (strain ATCC 51449 / 3B1).